A 92-amino-acid polypeptide reads, in one-letter code: Muscle LIM protein 1 (92 aa).

Positions 11-62 constitute an LIM zinc-binding domain; that stretch reads CPACGKSVYAAEERVAGGYKFHKTCFKCSMCNKALDSTNCTEHEKELFCKNC. Residues 65–70 carry the Nuclear localization signal motif; sequence RKYGPK.

As to expression, in the embryo, expression is restricted to the somatic, visceral, and pharyngeal muscles. Within the somatic musculature, MLP60 is distributed throughout the muscle fibers. There is no expression in cardiac mesoderm or in fat body.

The protein localises to the cytoplasm. The protein resides in the nucleus. Positive regulator of myogenesis. The polypeptide is Muscle LIM protein 1 (Mlp60A) (Drosophila melanogaster (Fruit fly)).